The sequence spans 317 residues: Putative HTH-type transcriptional regulatory protein NP_1320A (317 aa).

One can recognise an HTH cro/C1-type domain in the interval 132–189 (LSDIRSQEDMSLGKLANELGVSRRTVSKYEDGMSASVEVAAELEEIFDRKLASPVEVL). The segment at residues 143–162 (LGKLANELGVSRRTVSKYED) is a DNA-binding region (H-T-H motif).

The protein is Putative HTH-type transcriptional regulatory protein NP_1320A of Natronomonas pharaonis (strain ATCC 35678 / DSM 2160 / CIP 103997 / JCM 8858 / NBRC 14720 / NCIMB 2260 / Gabara) (Halobacterium pharaonis).